Here is a 314-residue protein sequence, read N- to C-terminus: Epithelial-stromal interaction protein 1 (314 aa).

3 disordered regions span residues 1–72, 227–272, and 289–314; these read MYTR…PNES, WAGS…RAQI, and QGKS…SWGL. Positions 18 to 30 are enriched in basic and acidic residues; the sequence is SRDHAGAGQRREL. Residue Ser39 is modified to Phosphoserine. The stretch at 71-180 forms a coiled coil; sequence ESRRQKIQRI…QEDIRRATFR (110 aa). Over residues 232–272 the composition is skewed to basic and acidic residues; sequence AHRDSPQKEDNPRLQKTRDGHQKNKLLETKGQHQEEERAQI. Residues 305 to 314 are compositionally biased toward polar residues; sequence NMNSTDSWGL.

In terms of tissue distribution, expressed in the spleen, with expression in T cells, B cells, natural killer cells and natural killer T cells and high expression in monocytes and macrophages.

Its function is as follows. Plays a role in M1 macrophage polarization and is required for the proper regulation of gene expression during M1 versus M2 macrophage differentiation. Might play a role in RELA/p65 and STAT1 phosphorylation and nuclear localization upon activation of macrophages. In Mus musculus (Mouse), this protein is Epithelial-stromal interaction protein 1 (Epsti1).